Consider the following 154-residue polypeptide: Transcription antitermination protein NusB (154 aa).

This sequence belongs to the NusB family.

Involved in transcription antitermination. Required for transcription of ribosomal RNA (rRNA) genes. Binds specifically to the boxA antiterminator sequence of the ribosomal RNA (rrn) operons. The sequence is that of Transcription antitermination protein NusB from Methylobacillus flagellatus (strain ATCC 51484 / DSM 6875 / VKM B-1610 / KT).